The following is a 184-amino-acid chain: Ribosome maturation factor RimM (184 aa).

The PRC barrel domain maps to 105–184 (EDEFYWRELF…RIEVDWDPAF (80 aa)).

This sequence belongs to the RimM family. In terms of assembly, binds ribosomal protein uS19.

It is found in the cytoplasm. In terms of biological role, an accessory protein needed during the final step in the assembly of 30S ribosomal subunit, possibly for assembly of the head region. Essential for efficient processing of 16S rRNA. May be needed both before and after RbfA during the maturation of 16S rRNA. It has affinity for free ribosomal 30S subunits but not for 70S ribosomes. This is Ribosome maturation factor RimM from Vibrio cholerae serotype O1 (strain ATCC 39541 / Classical Ogawa 395 / O395).